Reading from the N-terminus, the 525-residue chain is MTKNIHKHRILILDFGSQYTQLVARRVREIGVYCELWAWDVTEDQIREFNPSGIILSGGPESTTEHDSPRAPDYVFTAGVPVLGVCYGMQTMAMQLGGKVEGSNQREFGYAQVEIKTDSALIRDIKDAINPAGEAVLDVWMSHGDKVTAIPSDFVTVASTDTCPFAIMANEEKRFYGVQFHPEVTHTKQGQRLLERFVLDICACEALWTPATIIEDAIVRLREQIGEDHVILGLSGGVDSSVTAMLLHRAIGKRLTCVFVDNGLLRLNEADQVLEMFGDKFGLNIVHVAAEDRFLAALAGVDEPEAKRKIIGRVFVELFDEEACKQEQVKWLAQGTIYPDVIESAASATGKAHVIKSHHNVGGLPKEMKLGLVEPLKELFKDEVRKIGLELGLPYDMLYRHPFPGPGLGVRVLGEVKKEYCDLLRRADAIFIEELHKADLYNKVSQAFTVFLPVRSVGVMGDGRKYDWVVSLRAVETIDFMTAHWAHLPYDFLGRVSNRIINEVNGISRVVYDISGKPPATIEWE.

The region spanning 9–207 is the Glutamine amidotransferase type-1 domain; that stretch reads RILILDFGSQ…VLDICACEAL (199 aa). Catalysis depends on cysteine 86, which acts as the Nucleophile. Catalysis depends on residues histidine 181 and glutamate 183. Positions 208-400 constitute a GMPS ATP-PPase domain; it reads WTPATIIEDA…LGLPYDMLYR (193 aa). 235-241 is an ATP binding site; it reads SGGVDSS.

As to quaternary structure, homodimer.

It carries out the reaction XMP + L-glutamine + ATP + H2O = GMP + L-glutamate + AMP + diphosphate + 2 H(+). It participates in purine metabolism; GMP biosynthesis; GMP from XMP (L-Gln route): step 1/1. Catalyzes the synthesis of GMP from XMP. This is GMP synthase [glutamine-hydrolyzing] from Yersinia enterocolitica serotype O:8 / biotype 1B (strain NCTC 13174 / 8081).